Here is a 316-residue protein sequence, read N- to C-terminus: Insulin-like growth factor-binding protein 2 (316 aa).

Residues 1 to 29 form the signal peptide; it reads MLPRLGGTALSLLPLLLLLLGTGGRGARA. Positions 31–126 constitute an IGFBP N-terminal domain; that stretch reads VLFRCPPCTP…VLGEGTCEKR (96 aa). 6 cysteine pairs are disulfide-bonded: cysteine 35/cysteine 76, cysteine 38/cysteine 78, cysteine 46/cysteine 79, cysteine 68/cysteine 82, cysteine 90/cysteine 103, and cysteine 97/cysteine 123. Residues 189–217 are disordered; sequence QHRQMGKGGKHHLGLEEPKKLRPPPARTP. One can recognise a Thyroglobulin type-1 domain in the interval 215-297; it reads RTPCQQELDQ…APTIRGDPEC (83 aa). 3 disulfides stabilise this stretch: cysteine 218–cysteine 252, cysteine 263–cysteine 274, and cysteine 276–cysteine 297. A Cell attachment site motif is present at residues 292–294; that stretch reads RGD.

Interacts with IGF1. Interacts with IGF2. Interacts (via RGD motif) with integrin alpha5/ITGA5; this interaction induces cell migration, adhesion or apoptosis according to the context. Interacts with PTPRB; this interaction leads to PTPRB dimerization and inactivation. Post-translationally, cleaved by MMP9 leading to release of free IGF2 from IGFBP2-IGF2 complex, which contributes to enhance the motility and the growth of astrocytes. O-glycosylated.

The protein resides in the secreted. In terms of biological role, may have both growth-inhibiting and growth-promoting effects, depending on tissue type; increases IGF-induced DNA synthesis in the uterine epithelium. IGF-binding proteins prolong the half-life of the IGFs and have been shown to either inhibit or stimulate the growth promoting effects of the IGFs on cell culture. They alter the interaction of IGFs with their cell surface receptors. Multifunctional protein that plays a critical role in regulating the availability of IGFs such as IGF1 and IGF2 to their receptors and thereby regulates IGF-mediated cellular processes including proliferation, differentiation, and apoptosis in a cell-type specific manner. Functions coordinately with receptor protein tyrosine phosphatase beta/PTPRB and the IGF1 receptor to regulate IGF1-mediated signaling by stimulating the phosphorylation of PTEN leading to its inactivation and AKT1 activation. Plays a positive role in cell migration via interaction with integrin alpha5/ITGA5 through an RGD motif. Additionally, interaction with ITGA5/ITGB1 enhances the adhesion of endothelial progenitor cells to endothelial cells. Upon mitochondrial damage, facilitates apoptosis with ITGA5 of podocytes, and then activates the phosphorylation of focal adhesion kinase (FAK)-mediated mitochondrial injury. This chain is Insulin-like growth factor-binding protein 2 (IGFBP2), found in Sus scrofa (Pig).